We begin with the raw amino-acid sequence, 362 residues long: UDP-N-acetylglucosamine--N-acetylmuramyl-(pentapeptide) pyrophosphoryl-undecaprenol N-acetylglucosamine transferase (362 aa).

UDP-N-acetyl-alpha-D-glucosamine is bound by residues 21-23, Asn-129, Arg-170, Ser-198, and Gln-290; that span reads TGG.

It belongs to the glycosyltransferase 28 family. MurG subfamily.

Its subcellular location is the cell inner membrane. It catalyses the reaction di-trans,octa-cis-undecaprenyl diphospho-N-acetyl-alpha-D-muramoyl-L-alanyl-D-glutamyl-meso-2,6-diaminopimeloyl-D-alanyl-D-alanine + UDP-N-acetyl-alpha-D-glucosamine = di-trans,octa-cis-undecaprenyl diphospho-[N-acetyl-alpha-D-glucosaminyl-(1-&gt;4)]-N-acetyl-alpha-D-muramoyl-L-alanyl-D-glutamyl-meso-2,6-diaminopimeloyl-D-alanyl-D-alanine + UDP + H(+). The protein operates within cell wall biogenesis; peptidoglycan biosynthesis. Cell wall formation. Catalyzes the transfer of a GlcNAc subunit on undecaprenyl-pyrophosphoryl-MurNAc-pentapeptide (lipid intermediate I) to form undecaprenyl-pyrophosphoryl-MurNAc-(pentapeptide)GlcNAc (lipid intermediate II). This chain is UDP-N-acetylglucosamine--N-acetylmuramyl-(pentapeptide) pyrophosphoryl-undecaprenol N-acetylglucosamine transferase, found in Synechococcus sp. (strain JA-3-3Ab) (Cyanobacteria bacterium Yellowstone A-Prime).